The chain runs to 545 residues: CTP synthase (545 aa).

The interval 1-267 is amidoligase domain; the sequence is MTKFIFVTGG…AEQVLNLLQM (267 aa). Serine 13 is a CTP binding site. Residue serine 13 coordinates UTP. Residues 14–19 and aspartate 71 each bind ATP; that span reads SIGKGI. Residues aspartate 71 and glutamate 141 each coordinate Mg(2+). CTP-binding positions include 148-150, 188-193, and lysine 224; these read DIE and KTKPTQ. UTP-binding positions include 188–193 and lysine 224; that span reads KTKPTQ. The region spanning 292 to 534 is the Glutamine amidotransferase type-1 domain; that stretch reads EIAIVGKYVQ…IQAAIALSLS (243 aa). Glycine 354 provides a ligand contact to L-glutamine. Cysteine 381 acts as the Nucleophile; for glutamine hydrolysis in catalysis. Residues 382–385, glutamate 405, and arginine 462 contribute to the L-glutamine site; that span reads LGMQ. Active-site residues include histidine 507 and glutamate 509.

The protein belongs to the CTP synthase family. In terms of assembly, homotetramer.

It catalyses the reaction UTP + L-glutamine + ATP + H2O = CTP + L-glutamate + ADP + phosphate + 2 H(+). The enzyme catalyses L-glutamine + H2O = L-glutamate + NH4(+). It carries out the reaction UTP + NH4(+) + ATP = CTP + ADP + phosphate + 2 H(+). It functions in the pathway pyrimidine metabolism; CTP biosynthesis via de novo pathway; CTP from UDP: step 2/2. Its activity is regulated as follows. Allosterically activated by GTP, when glutamine is the substrate; GTP has no effect on the reaction when ammonia is the substrate. The allosteric effector GTP functions by stabilizing the protein conformation that binds the tetrahedral intermediate(s) formed during glutamine hydrolysis. Inhibited by the product CTP, via allosteric rather than competitive inhibition. Functionally, catalyzes the ATP-dependent amination of UTP to CTP with either L-glutamine or ammonia as the source of nitrogen. Regulates intracellular CTP levels through interactions with the four ribonucleotide triphosphates. The protein is CTP synthase of Nostoc punctiforme (strain ATCC 29133 / PCC 73102).